The chain runs to 64 residues: Potassium channel toxin kappa-KTx 3.1 (64 aa).

A signal peptide spans 1-26; it reads MKSTLMTASVLILVLLSIVDYASVYA. A propeptide spanning residues 27–36 is cleaved from the precursor; sequence EFIDSEISLE. 2 disulfide bridges follow: Cys-43-Cys-61 and Cys-47-Cys-57.

This sequence belongs to the short scorpion toxin superfamily. Potassium channel inhibitor kappa-KTx family. Kappa-KTx 3 subfamily. As to expression, expressed by the venom gland.

The protein localises to the secreted. Its function is as follows. Potassium channel inhibitor (Kv). This chain is Potassium channel toxin kappa-KTx 3.1, found in Heterometrus petersii (Asian forest scorpion).